The following is a 320-amino-acid chain: Aspartate carbamoyltransferase catalytic subunit (320 aa).

Residues R57 and T58 each contribute to the carbamoyl phosphate site. K85 serves as a coordination point for L-aspartate. R107, H141, and Q144 together coordinate carbamoyl phosphate. R174 and R228 together coordinate L-aspartate. Carbamoyl phosphate contacts are provided by G269 and P270.

The protein belongs to the aspartate/ornithine carbamoyltransferase superfamily. ATCase family. Heterododecamer (2C3:3R2) of six catalytic PyrB chains organized as two trimers (C3), and six regulatory PyrI chains organized as three dimers (R2).

It carries out the reaction carbamoyl phosphate + L-aspartate = N-carbamoyl-L-aspartate + phosphate + H(+). The protein operates within pyrimidine metabolism; UMP biosynthesis via de novo pathway; (S)-dihydroorotate from bicarbonate: step 2/3. Its function is as follows. Catalyzes the condensation of carbamoyl phosphate and aspartate to form carbamoyl aspartate and inorganic phosphate, the committed step in the de novo pyrimidine nucleotide biosynthesis pathway. The chain is Aspartate carbamoyltransferase catalytic subunit from Mycobacterium marinum (strain ATCC BAA-535 / M).